The chain runs to 511 residues: Ulvan-active sulfatase (511 aa).

The first 34 residues, 1–34 (MNFKQNIVYKKMAISMKITAIRPIALVISFTLLS), serve as a signal peptide directing secretion. C35 carries N-palmitoyl cysteine lipidation. The S-diacylglycerol cysteine moiety is linked to residue C35. Positions 59 and 99 each coordinate Ca(2+). Residue C99 is the Nucleophile of the active site. 3-oxoalanine (Cys) is present on C99. H149 is an active-site residue. D305 serves as a coordination point for Ca(2+).

Belongs to the sulfatase family. It depends on Ca(2+) as a cofactor. In terms of processing, the conversion to 3-oxoalanine (also known as C-formylglycine, FGly), of a serine or cysteine residue in prokaryotes and of a cysteine residue in eukaryotes, is critical for catalytic activity. This post-translational modification is severely defective in multiple sulfatase deficiency (MSD).

It is found in the cell membrane. In terms of biological role, sulfatase involved in ulvan degradation. Ulvan is the main polysaccharide component of the Ulvales (green seaweed) cell wall. It is composed of disaccharide building blocks comprising 3-sulfated rhamnose (Rha3S) linked to D-glucuronic acid (GlcA), L-iduronic acid (IduA), or D-xylose (Xyl). The sequence is that of Ulvan-active sulfatase from Formosa agariphila (strain DSM 15362 / KCTC 12365 / LMG 23005 / KMM 3901 / M-2Alg 35-1).